A 1173-amino-acid chain; its full sequence is MPSTVLWATDIFGKVFTLSTDGQQWAPCKNGHVEFKRVSAVRSCCWGVGCNHQIYLYVHASDLPIRYQEETYENQRWNPVDGYCEKLLPSDRWQWSDVTGLRHQQLESFMLPSPHWEWESDWYVDENIGGEPTEKGGWTYAIDFPATYTKDKKWNSCVRRRRWIRYRKYKSRNTWAKIPSHEDNKKLPDPFNDITVGGWEITDEPVGRLSVWAASLQGKVWYREDVCQNIPEGSSWTELETPSEVIQISCGPNDLLWASLWEGQAMVREGINRNNPKGSSWTIVEAPTPENGIMHVSVGVNVVWAVTKDRKVWFRRGVNSHNPCGTGWIEMVGEMAMVDVGLNDQVFGVGYEDRAVYFRQGVTPSELSGKAWKSIVVPRGNERSNSESPNSLLSAGCFFGDEIKEHSDSPIPSDIESSSEPEQSAVQENSSDSSEPADVGPSQQDEPKDEELSAVLELDGQQKAGSSLSKDSGEDSAHSAGPVPKAGAPKWTSIDLLEARINPARASGDMTGLSTLGIFTAGEEESFVCETHPLWTWVSGGGCLVESHTPLKWFTLQTGLSASMQSLSLSITPAHTAAWRKQIFDQLSERSKRELDSFRHYEQAVEQSVWVKTGALQWYRDWKPNKWIDVRVALEQLTGTDGSRDSILFVYYTHGEEKKYIHIFLNEVTILVPVANEAKHSFAIYTPEKTKQRWPIRLAAATEQEMHDWLVLLSMSCYESRKLQGAPSSQAIWSVTCKGDIFVSEPKADLESVTNGRSCDQMFWRQIGGHLRMVESSSNGVVWGLGYDHTAWVYTGGYGGGFFPGIASSTDNIFPQTDTKCVYIYENQRWNPITGYSSTGLPTDRYMWSDASGLQECTKTNTKPPSPQWTWVSDWYIDFNVPGGTDREGWQFAADFPASYHGYKTIKDFVRRRRWARKCRIVTSGPWLEVPPICLWDISISPSSGAHNSESIALWAISNKGDVLCRLGVTKQSPSGSSWLHVGTDQPFISVSVGGCLQVWAIARDGSAFYRGSVSPAQPAGDCWYHIPSPHKQKLQQVSVGHTSVFVVDENGNLWFRHGITPTYPQGTTWEHMSNNIRKVSVGPLDQIWVIADKVQGSHSLSCGTVCHRLGVQPMQLKGHSWDYGIGGGWEHITVRGNRADMAKTLQPKENATEKPDPQEENGESAFSHIANC.

TECPR repeat units follow at residues 209–240, 254–285, 301–332, and 344–376; these read LSVW…TELE, DLLW…TIVE, NVVW…IEMV, and DQVF…KSIV. The segment at 403 to 489 is disordered; that stretch reads IKEHSDSPIP…AGPVPKAGAP (87 aa). Positions 409-422 are enriched in low complexity; that stretch reads SPIPSDIESSSEPE. The span at 424–434 shows a compositional bias: polar residues; the sequence is SAVQENSSDSS. One can recognise a PH domain in the interval 609 to 718; the sequence is VWVKTGALQW…WLVLLSMSCY (110 aa). 5 TECPR repeats span residues 730–757, 952–983, 997–1028, 1043–1074, and 1086–1126; these read QAIW…TNGR, IALW…LHVG, LQVW…YHIP, TSVF…EHMS, and DQIW…DYGI. The tract at residues 1147–1173 is disordered; the sequence is QPKENATEKPDPQEENGESAFSHIANC.

Belongs to the TECPR1 family.

It is found in the cytoplasmic vesicle. The protein localises to the autophagosome membrane. The protein resides in the lysosome membrane. In terms of biological role, tethering factor involved in autophagy. Involved in autophagosome maturation by promoting the autophagosome fusion with lysosomes. Binds phosphatidylinositol-3-phosphate (PtdIns(3)P) present at the surface of autophagosomes. The protein is Tectonin beta-propeller repeat-containing protein 1 (tecpr1) of Xenopus tropicalis (Western clawed frog).